The chain runs to 231 residues: Acyl-protein thioesterase 2 (231 aa).

Cys-2 carries S-palmitoyl cysteine lipidation. Ser-82 bears the Phosphoserine mark. Residues Ser-122, Asp-176, and His-210 each act as charge relay system in the active site.

The protein belongs to the AB hydrolase superfamily. AB hydrolase 2 family. In terms of tissue distribution, expressed in various breast cancer cell lines.

Its subcellular location is the cytoplasm. The catalysed reaction is S-hexadecanoyl-L-cysteinyl-[protein] + H2O = L-cysteinyl-[protein] + hexadecanoate + H(+). It carries out the reaction prostaglandin E2 1-glyceryl ester + H2O = prostaglandin E2 + glycerol + H(+). The enzyme catalyses 1-hexadecanoyl-sn-glycero-3-phosphocholine + H2O = sn-glycerol 3-phosphocholine + hexadecanoate + H(+). It catalyses the reaction 1-octadecanoyl-sn-glycero-3-phosphocholine + H2O = octadecanoate + sn-glycerol 3-phosphocholine + H(+). The catalysed reaction is 1-hexadecanoyl-sn-glycero-3-phosphate + H2O = sn-glycerol 3-phosphate + hexadecanoate + H(+). It carries out the reaction 1-hexadecanoyl-sn-glycero-3-phospho-L-serine + H2O = sn-glycero-3-phospho-L-serine + hexadecanoate + H(+). Its activity is regulated as follows. Inhibited by compound 1 or (5,5-Dioxido-4H-thieno[3,2-c]thiochromen-2-yl)(4-(4-methoxyphenyl)piperazin-1-yl)methanone. In terms of biological role, acts as an acyl-protein thioesterase hydrolyzing fatty acids from S-acylated cysteine residues in proteins such as trimeric G alpha proteins, GSDMD, GAP43, ZDHHC6 or HRAS. Deacylates GAP43. Mediates depalmitoylation of ZDHHC6. Has lysophospholipase activity. Hydrolyzes prostaglandin glycerol esters (PG-Gs) in the following order prostaglandin D2-glycerol ester (PGD2-G) &gt; prostaglandin E2 glycerol ester (PGE2-G) &gt; prostaglandin F2-alpha-glycerol ester (PGF2-alpha-G). Hydrolyzes 1-arachidonoylglycerol but not 2-arachidonoylglycerol or arachidonoylethanolamide. The sequence is that of Acyl-protein thioesterase 2 (LYPLA2) from Homo sapiens (Human).